Reading from the N-terminus, the 269-residue chain is Aminodeoxychorismate lyase (269 aa).

Lys140 carries the N6-(pyridoxal phosphate)lysine modification.

It belongs to the class-IV pyridoxal-phosphate-dependent aminotransferase family. Homodimer. It depends on pyridoxal 5'-phosphate as a cofactor.

It catalyses the reaction 4-amino-4-deoxychorismate = 4-aminobenzoate + pyruvate + H(+). It participates in cofactor biosynthesis; tetrahydrofolate biosynthesis; 4-aminobenzoate from chorismate: step 2/2. Functionally, involved in the biosynthesis of p-aminobenzoate (PABA), a precursor of tetrahydrofolate. Converts 4-amino-4-deoxychorismate into 4-aminobenzoate (PABA) and pyruvate. The protein is Aminodeoxychorismate lyase (pabC) of Escherichia coli (strain K12).